The following is a 256-amino-acid chain: Imidazole glycerol phosphate synthase subunit HisF (256 aa).

Active-site residues include Asp-12 and Asp-131.

It belongs to the HisA/HisF family. In terms of assembly, heterodimer of HisH and HisF.

It is found in the cytoplasm. The catalysed reaction is 5-[(5-phospho-1-deoxy-D-ribulos-1-ylimino)methylamino]-1-(5-phospho-beta-D-ribosyl)imidazole-4-carboxamide + L-glutamine = D-erythro-1-(imidazol-4-yl)glycerol 3-phosphate + 5-amino-1-(5-phospho-beta-D-ribosyl)imidazole-4-carboxamide + L-glutamate + H(+). The protein operates within amino-acid biosynthesis; L-histidine biosynthesis; L-histidine from 5-phospho-alpha-D-ribose 1-diphosphate: step 5/9. IGPS catalyzes the conversion of PRFAR and glutamine to IGP, AICAR and glutamate. The HisF subunit catalyzes the cyclization activity that produces IGP and AICAR from PRFAR using the ammonia provided by the HisH subunit. This Pseudomonas fluorescens (strain Pf0-1) protein is Imidazole glycerol phosphate synthase subunit HisF.